The sequence spans 365 residues: Putative glutamate--cysteine ligase 2-2 (365 aa).

It belongs to the glutamate--cysteine ligase type 2 family. YbdK subfamily.

It carries out the reaction L-cysteine + L-glutamate + ATP = gamma-L-glutamyl-L-cysteine + ADP + phosphate + H(+). Its function is as follows. ATP-dependent carboxylate-amine ligase which exhibits weak glutamate--cysteine ligase activity. The sequence is that of Putative glutamate--cysteine ligase 2-2 from Mycolicibacterium vanbaalenii (strain DSM 7251 / JCM 13017 / BCRC 16820 / KCTC 9966 / NRRL B-24157 / PYR-1) (Mycobacterium vanbaalenii).